A 700-amino-acid chain; its full sequence is Elongation factor G (700 aa).

Residues Thr-10–Leu-286 form the tr-type G domain. GTP contacts are provided by residues Ala-19 to Thr-26, Asp-83 to His-87, and Asn-137 to Asp-140.

The protein belongs to the TRAFAC class translation factor GTPase superfamily. Classic translation factor GTPase family. EF-G/EF-2 subfamily.

The protein resides in the cytoplasm. In terms of biological role, catalyzes the GTP-dependent ribosomal translocation step during translation elongation. During this step, the ribosome changes from the pre-translocational (PRE) to the post-translocational (POST) state as the newly formed A-site-bound peptidyl-tRNA and P-site-bound deacylated tRNA move to the P and E sites, respectively. Catalyzes the coordinated movement of the two tRNA molecules, the mRNA and conformational changes in the ribosome. This chain is Elongation factor G, found in Kineococcus radiotolerans (strain ATCC BAA-149 / DSM 14245 / SRS30216).